The following is a 228-amino-acid chain: Putative L-ribulose-5-phosphate 4-epimerase UlaF (228 aa).

Substrate-binding positions include G26 to N27, S43 to G44, and S72 to S73. 3 residues coordinate Zn(2+): D74, H93, and H95. D118 functions as the Proton donor/acceptor in the catalytic mechanism. H167 serves as a coordination point for Zn(2+). Y225 (proton donor/acceptor) is an active-site residue.

The protein belongs to the aldolase class II family. AraD/FucA subfamily. Zn(2+) is required as a cofactor.

The catalysed reaction is L-ribulose 5-phosphate = D-xylulose 5-phosphate. Its pathway is cofactor degradation; L-ascorbate degradation; D-xylulose 5-phosphate from L-ascorbate: step 4/4. Its function is as follows. Catalyzes the isomerization of L-ribulose 5-phosphate to D-xylulose 5-phosphate. Is involved in the anaerobic L-ascorbate utilization. This chain is Putative L-ribulose-5-phosphate 4-epimerase UlaF, found in Shigella boydii serotype 4 (strain Sb227).